The chain runs to 701 residues: Protein mono-ADP-ribosyltransferase PARP12 (701 aa).

C3H1-type zinc fingers lie at residues 94–119 (LCRFMVYGACKFLRAGKNCRNSHSLT), 150–179 (WLLPEICQHYNKGDGPHGSCAFQKQCIKLH), and 180–202 (ICQYFLQGECKFGTSCKRSHDFS). The tract at residues 234 to 268 (KNKSSAPSRVPPLFVPQGTSERKDSSGSVSPNTLS) is disordered. A Phosphoserine modification is found at Ser-258. The span at 259-268 (SGSVSPNTLS) shows a compositional bias: polar residues. 2 C3H1-type zinc fingers span residues 270–297 (EEGDQICLYHIRKSCSFQDKCHRVHFHL) and 271–296 (EGDQICLYHIRKSCSFQDKCHRVHFH). 2 consecutive WWE domains span residues 298–361 (PYRW…RLST) and 364–458 (SVTK…KVCR). Position 474 is an ADP-ribosylcysteine (Cys-474). The region spanning 484–698 (IPDYWDSSAL…ILLALGSLFS (215 aa)) is the PARP catalytic domain. ADP-ribosyl aspartic acid is present on residues Asp-600 and Asp-611.

This sequence belongs to the ARTD/PARP family. Interacts with PARP11; this interaction plays a key role in zika virus suppression. Interacts with ISG15. In terms of processing, auto-mono-ADP-ribosylated. Phosphorylated by PRKD1.

The protein resides in the nucleus. It localises to the golgi apparatus. The protein localises to the trans-Golgi network. Its subcellular location is the cytoplasm. It is found in the stress granule. The enzyme catalyses L-aspartyl-[protein] + NAD(+) = 4-O-(ADP-D-ribosyl)-L-aspartyl-[protein] + nicotinamide. The catalysed reaction is L-cysteinyl-[protein] + NAD(+) = S-(ADP-D-ribosyl)-L-cysteinyl-[protein] + nicotinamide + H(+). In terms of biological role, mono-ADP-ribosyltransferase that mediates mono-ADP-ribosylation of target proteins. Acts as an antiviral factor by cooperating with PARP11 to suppress Zika virus replication. Displays anti-alphavirus activity during IFN-gamma immune activation by directly ADP-ribosylating the alphaviral non-structural proteins nsP3 and nsP4. Acts as a component of the PRKD1-driven regulatory cascade that selectively controls a major branch of the basolateral transport pathway by catalyzing the MARylation of GOLGA1. Acts also as a key regulator of mitochondrial function, protein translation, and inflammation. Inhibits PINK1/Parkin-dependent mitophagy and promotes cartilage degeneration by inhibiting the ubiquitination and SUMOylation of MFN1/2 by upregulating ISG15 and ISGylation. The sequence is that of Protein mono-ADP-ribosyltransferase PARP12 from Homo sapiens (Human).